The sequence spans 425 residues: Nuclear hormone receptor family member nhr-13 (425 aa).

Residues 5–83 (PNSCEVCSSS…IGMKPLLVKS (79 aa)) constitute a DNA-binding region (nuclear receptor). 2 consecutive NR C4-type zinc fingers follow at residues 11-30 (CSSSSNSSCNHFGARTCKAC) and 46-71 (CIDQPDACRVHCDSRVICRFCRLKKC). Residues 108–148 (VKENSEEIQNDDDPQESDAEMENESTPGPSSEPSENVSAEN) are disordered. A compositionally biased stretch (acidic residues) spans 113–130 (EEIQNDDDPQESDAEMEN). Positions 131-142 (ESTPGPSSEPSE) are enriched in low complexity. The NR LBD domain occupies 147-414 (ENQETVTKFL…KSMISLTSFW (268 aa)).

This sequence belongs to the nuclear hormone receptor family. May interact with nuclear hormone receptor nhr-49.

The protein resides in the nucleus. Its function is as follows. Orphan nuclear receptor. Involved in regulating fatty acid desaturase genes, acting in concert with nuclear hormone receptor nhr-49. The polypeptide is Nuclear hormone receptor family member nhr-13 (nhr-13) (Caenorhabditis elegans).